A 975-amino-acid chain; its full sequence is Glycine dehydrogenase (decarboxylating) (975 aa).

N6-(pyridoxal phosphate)lysine is present on K723.

This sequence belongs to the GcvP family. The glycine cleavage system is composed of four proteins: P, T, L and H. Pyridoxal 5'-phosphate is required as a cofactor.

It carries out the reaction N(6)-[(R)-lipoyl]-L-lysyl-[glycine-cleavage complex H protein] + glycine + H(+) = N(6)-[(R)-S(8)-aminomethyldihydrolipoyl]-L-lysyl-[glycine-cleavage complex H protein] + CO2. Its function is as follows. The glycine cleavage system catalyzes the degradation of glycine. The P protein binds the alpha-amino group of glycine through its pyridoxal phosphate cofactor; CO(2) is released and the remaining methylamine moiety is then transferred to the lipoamide cofactor of the H protein. The chain is Glycine dehydrogenase (decarboxylating) from Burkholderia thailandensis (strain ATCC 700388 / DSM 13276 / CCUG 48851 / CIP 106301 / E264).